The chain runs to 230 residues: uncharacterized protein (230 aa).

Active-site charge relay system residues include Ser-124 and His-158.

The protein belongs to the peptidase S51 family.

This is an uncharacterized protein from Bacillus subtilis (strain 168).